A 277-amino-acid chain; its full sequence is Energy-coupling factor transporter ATP-binding protein EcfA1 (277 aa).

Positions 4–238 constitute an ABC transporter domain; sequence IETQDLCHTY…PDLLSSVRLD (235 aa). ATP is bound at residue 37–44; the sequence is GPNGAGKS.

It belongs to the ABC transporter superfamily. Energy-coupling factor EcfA family. In terms of assembly, forms a stable energy-coupling factor (ECF) transporter complex composed of 2 membrane-embedded substrate-binding proteins (S component), 2 ATP-binding proteins (A component) and 2 transmembrane proteins (T component).

The protein resides in the cell membrane. Its function is as follows. ATP-binding (A) component of a common energy-coupling factor (ECF) ABC-transporter complex. Unlike classic ABC transporters this ECF transporter provides the energy necessary to transport a number of different substrates. This Methanospirillum hungatei JF-1 (strain ATCC 27890 / DSM 864 / NBRC 100397 / JF-1) protein is Energy-coupling factor transporter ATP-binding protein EcfA1.